We begin with the raw amino-acid sequence, 70 residues long: Small ribosomal subunit protein bS21B (70 aa).

It belongs to the bacterial ribosomal protein bS21 family.

The chain is Small ribosomal subunit protein bS21B from Rhizobium etli (strain ATCC 51251 / DSM 11541 / JCM 21823 / NBRC 15573 / CFN 42).